We begin with the raw amino-acid sequence, 278 residues long: Ubiquinone biosynthesis protein COQ4, mitochondrial (278 aa).

A mitochondrion-targeting transit peptide spans 1-28 (MATPTSVRIAGFRSLQALCAQRTVTRNF). Positions 164, 165, 168, and 180 each coordinate Zn(2+).

This sequence belongs to the COQ4 family. In terms of assembly, component of a multi-subunit COQ enzyme complex, composed of at least COQ3, COQ4, COQ5, COQ6, COQ7 and COQ9. The cofactor is Zn(2+).

The protein resides in the mitochondrion inner membrane. The catalysed reaction is a 4-hydroxy-3-methoxy-5-(all-trans-polyprenyl)benzoate + H(+) = a 2-methoxy-6-(all-trans-polyprenyl)phenol + CO2. It functions in the pathway cofactor biosynthesis; ubiquinone biosynthesis. Its function is as follows. Lyase that catalyzes the C1-decarboxylation of 4-hydroxy-3-methoxy-5-(all-trans-polyprenyl)benzoic acid into 2-methoxy-6-(all-trans-polyprenyl)phenol during ubiquinone biosynthesis. The protein is Ubiquinone biosynthesis protein COQ4, mitochondrial of Uncinocarpus reesii (strain UAMH 1704).